The following is a 106-amino-acid chain: Ribosomal processing cysteine protease Prp (106 aa).

The active-site Proton donor is the H22. The active-site Nucleophile is the C34.

Belongs to the Prp family. As to quaternary structure, homodimer. A mutant protein unable to cleave bL27 copurifies with its substrate.

Its activity is regulated as follows. Not inhibited by short peptide analogs; a 6-mer inhibits only 20% while a 13-mer inhibits 63%. Inhibited by Ac-KLNLQFF-CH(2) which binds covalantly to Cys-34. Inhibited by mersalyl acid (C13H18HgNO6). Its function is as follows. An essential cysteine protease that cleaves the N-terminal 9 amino acids from ribosomal protein bL27. Also acts as an N-terminal protease on the major capsid and scaffold assembly proteins of bacteriophage 80alpha. Cleavage of the N-terminus of bL27 (and thus this enzyme) is essential for growth; it cannot be replaced by a 'pre-cleaved' or non-cleavable form of bL27. Might serve a chaperone function during ribosome assembly. This chain is Ribosomal processing cysteine protease Prp, found in Staphylococcus aureus (strain NCTC 8325 / PS 47).